The following is a 247-amino-acid chain: Carboxy-S-adenosyl-L-methionine synthase (247 aa).

S-adenosyl-L-methionine-binding positions include Y40, 65 to 67 (GAS), 90 to 91 (DN), 122 to 123 (DI), N137, and R204.

It belongs to the class I-like SAM-binding methyltransferase superfamily. Cx-SAM synthase family. Homodimer.

The enzyme catalyses prephenate + S-adenosyl-L-methionine = carboxy-S-adenosyl-L-methionine + 3-phenylpyruvate + H2O. In terms of biological role, catalyzes the conversion of S-adenosyl-L-methionine (SAM) to carboxy-S-adenosyl-L-methionine (Cx-SAM). In Pseudomonas putida (strain ATCC 47054 / DSM 6125 / CFBP 8728 / NCIMB 11950 / KT2440), this protein is Carboxy-S-adenosyl-L-methionine synthase.